Consider the following 321-residue polypeptide: Acetyl-coenzyme A carboxylase carboxyl transferase subunit alpha (321 aa).

The CoA carboxyltransferase C-terminal domain maps to Asp-32 to Glu-293.

This sequence belongs to the AccA family. As to quaternary structure, acetyl-CoA carboxylase is a heterohexamer composed of biotin carboxyl carrier protein (AccB), biotin carboxylase (AccC) and two subunits each of ACCase subunit alpha (AccA) and ACCase subunit beta (AccD).

It localises to the cytoplasm. The catalysed reaction is N(6)-carboxybiotinyl-L-lysyl-[protein] + acetyl-CoA = N(6)-biotinyl-L-lysyl-[protein] + malonyl-CoA. The protein operates within lipid metabolism; malonyl-CoA biosynthesis; malonyl-CoA from acetyl-CoA: step 1/1. Component of the acetyl coenzyme A carboxylase (ACC) complex. First, biotin carboxylase catalyzes the carboxylation of biotin on its carrier protein (BCCP) and then the CO(2) group is transferred by the carboxyltransferase to acetyl-CoA to form malonyl-CoA. The chain is Acetyl-coenzyme A carboxylase carboxyl transferase subunit alpha from Chromobacterium violaceum (strain ATCC 12472 / DSM 30191 / JCM 1249 / CCUG 213 / NBRC 12614 / NCIMB 9131 / NCTC 9757 / MK).